The primary structure comprises 555 residues: Formate--tetrahydrofolate ligase (555 aa).

Position 65–72 (65–72) interacts with ATP; sequence TPAGEGKT.

This sequence belongs to the formate--tetrahydrofolate ligase family.

The catalysed reaction is (6S)-5,6,7,8-tetrahydrofolate + formate + ATP = (6R)-10-formyltetrahydrofolate + ADP + phosphate. It participates in one-carbon metabolism; tetrahydrofolate interconversion. This chain is Formate--tetrahydrofolate ligase, found in Thermoanaerobacter pseudethanolicus (strain ATCC 33223 / 39E) (Clostridium thermohydrosulfuricum).